The primary structure comprises 280 residues: Tryptophan 2,3-dioxygenase (280 aa).

Substrate is bound by residues 47–51 (FVVQH), Tyr109, and Arg113. His236 serves as a coordination point for heme. Thr250 is a binding site for substrate.

The protein belongs to the tryptophan 2,3-dioxygenase family. As to quaternary structure, homotetramer. Heme serves as cofactor.

The catalysed reaction is L-tryptophan + O2 = N-formyl-L-kynurenine. The protein operates within amino-acid degradation; L-tryptophan degradation via kynurenine pathway; L-kynurenine from L-tryptophan: step 1/2. Functionally, heme-dependent dioxygenase that catalyzes the oxidative cleavage of the L-tryptophan (L-Trp) pyrrole ring and converts L-tryptophan to N-formyl-L-kynurenine. Catalyzes the oxidative cleavage of the indole moiety. The chain is Tryptophan 2,3-dioxygenase from Serratia proteamaculans (strain 568).